Consider the following 144-residue polypeptide: MKTYNIVIASDHSGYELKSEIINYLEQKSLKIYDCGTNNTQTVDYPDYAKKVVDIIIEKSAPIGILISDTGIGMSIAANRSSEIRAALCNNILTAENAKAHNDANILILGAKTIDQKIVFDIIDKFLTTQFEGGRHSTRLSKIK.

Histidine 12 contacts substrate. Histidine 101 (proton donor) is an active-site residue. A substrate-binding site is contributed by arginine 135.

The protein belongs to the LacAB/RpiB family.

The polypeptide is Putative sugar phosphate isomerase RC0402 (Rickettsia conorii (strain ATCC VR-613 / Malish 7)).